A 479-amino-acid chain; its full sequence is Ubiquinone biosynthesis monooxygenase COQ6, mitochondrial (479 aa).

This sequence belongs to the UbiH/COQ6 family. As to quaternary structure, component of a multi-subunit COQ enzyme complex, composed of at least COQ3, COQ4, COQ5, COQ6, COQ7 and COQ9. It depends on FAD as a cofactor.

It is found in the mitochondrion inner membrane. It carries out the reaction 4-hydroxy-3-(all-trans-decaprenyl)benzoate + 2 reduced [2Fe-2S]-[ferredoxin] + O2 + 2 H(+) = 3,4-dihydroxy-5-(all-trans-decaprenyl)benzoate + 2 oxidized [2Fe-2S]-[ferredoxin] + H2O. The enzyme catalyses 2-methoxy-6-(all-trans-decaprenyl)phenol + 2 reduced [2Fe-2S]-[ferredoxin] + O2 + 2 H(+) = 2-methoxy-6-(all-trans-decaprenyl)benzene-1,4-diol + 2 oxidized [2Fe-2S]-[ferredoxin] + H2O. Its pathway is cofactor biosynthesis; ubiquinone biosynthesis. Its function is as follows. FAD-dependent monooxygenase required for two non-consecutive steps during ubiquinone biosynthesis. Required for the C5-ring hydroxylation during ubiquinone biosynthesis by catalyzing the hydroxylation of 4-hydroxy-3-(all-trans-decaprenyl)benzoic acid to 3,4-dihydroxy-5-(all-trans-decaprenyl)benzoic acid. Also acts downstream of COQ4, for the C1-hydroxylation during ubiquinone biosynthesis by catalyzing the hydroxylation of 2-methoxy-6-(all-trans-decaprenyl)phenol to 2-methoxy-6-(all-trans-decaprenyl)benzene-1,4-diol. The electrons required for the hydroxylation reaction are funneled indirectly to coq6 from NADPH via a ferredoxin/ferredoxin reductase system. The chain is Ubiquinone biosynthesis monooxygenase COQ6, mitochondrial from Schizosaccharomyces pombe (strain 972 / ATCC 24843) (Fission yeast).